Here is a 290-residue protein sequence, read N- to C-terminus: Acetylglutamate kinase (290 aa).

Substrate contacts are provided by residues 72 to 73 (GG), Arg-94, and Asn-187.

This sequence belongs to the acetylglutamate kinase family. ArgB subfamily.

The protein resides in the plastid. It localises to the chloroplast. The enzyme catalyses N-acetyl-L-glutamate + ATP = N-acetyl-L-glutamyl 5-phosphate + ADP. The protein operates within amino-acid biosynthesis; L-arginine biosynthesis; N(2)-acetyl-L-ornithine from L-glutamate: step 2/4. Catalyzes the ATP-dependent phosphorylation of N-acetyl-L-glutamate. This is Acetylglutamate kinase from Cyanidioschyzon merolae (strain NIES-3377 / 10D) (Unicellular red alga).